Reading from the N-terminus, the 140-residue chain is Protein BIC1 (140 aa).

The segment covering 1–10 has biased composition (polar residues); sequence MMNIDDTTSP. The tract at residues 1–71 is disordered; the sequence is MMNIDDTTSP…RVDTGRERLK (71 aa). Positions 42-68 are enriched in basic and acidic residues; that stretch reads ADKKDLALLEEKPKQSQEEDRVDTGRE.

In terms of assembly, interacts with CRY2 in both darkness and light.

The protein localises to the nucleus. Regulates the blue-light dependent dimerization of CRY2 and formation of photobodies. Interacts with photoexited CRY2 to inhibit its activity. Inhibits CRY phosphorylation. This chain is Protein BIC1, found in Arabidopsis thaliana (Mouse-ear cress).